The primary structure comprises 143 residues: Large ribosomal subunit protein uL11 (143 aa).

It belongs to the universal ribosomal protein uL11 family. As to quaternary structure, part of the ribosomal stalk of the 50S ribosomal subunit. Interacts with L10 and the large rRNA to form the base of the stalk. L10 forms an elongated spine to which L12 dimers bind in a sequential fashion forming a multimeric L10(L12)X complex. One or more lysine residues are methylated.

Forms part of the ribosomal stalk which helps the ribosome interact with GTP-bound translation factors. The protein is Large ribosomal subunit protein uL11 of Kineococcus radiotolerans (strain ATCC BAA-149 / DSM 14245 / SRS30216).